Here is a 91-residue protein sequence, read N- to C-terminus: MPLHKSAEKRLRQSERRNARNRSRKKELKVLVKTMQKLIDTSAEKAVVEVAYRSAVQKLDRLGVKNYIHANKASRKKSQLTRLMNSYVKAD.

Basic and acidic residues predominate over residues 1–18 (MPLHKSAEKRLRQSERRN). The tract at residues 1–26 (MPLHKSAEKRLRQSERRNARNRSRKK) is disordered.

The protein belongs to the bacterial ribosomal protein bS20 family.

Its function is as follows. Binds directly to 16S ribosomal RNA. This is Small ribosomal subunit protein bS20 from Pelodictyon phaeoclathratiforme (strain DSM 5477 / BU-1).